The primary structure comprises 183 residues: ATP-dependent protease subunit HslV (183 aa).

Residue Thr-13 is part of the active site. Na(+) is bound by residues Gly-168, Cys-171, and Thr-174.

This sequence belongs to the peptidase T1B family. HslV subfamily. As to quaternary structure, a double ring-shaped homohexamer of HslV is capped on each side by a ring-shaped HslU homohexamer. The assembly of the HslU/HslV complex is dependent on binding of ATP.

Its subcellular location is the cytoplasm. The catalysed reaction is ATP-dependent cleavage of peptide bonds with broad specificity.. With respect to regulation, allosterically activated by HslU binding. Functionally, protease subunit of a proteasome-like degradation complex believed to be a general protein degrading machinery. The sequence is that of ATP-dependent protease subunit HslV from Xanthomonas euvesicatoria pv. vesicatoria (strain 85-10) (Xanthomonas campestris pv. vesicatoria).